Consider the following 312-residue polypeptide: Pyrimidine-specific ribonucleoside hydrolase RihA (312 aa).

Residue His240 is part of the active site.

It belongs to the IUNH family. RihA subfamily.

Hydrolyzes cytidine or uridine to ribose and cytosine or uracil, respectively. In Shewanella woodyi (strain ATCC 51908 / MS32), this protein is Pyrimidine-specific ribonucleoside hydrolase RihA.